A 67-amino-acid polypeptide reads, in one-letter code: Large ribosomal subunit protein bL32c (67 aa).

The protein belongs to the bacterial ribosomal protein bL32 family.

The protein localises to the plastid. It localises to the chloroplast. This chain is Large ribosomal subunit protein bL32c, found in Chara vulgaris (Common stonewort).